The primary structure comprises 183 residues: ATP-dependent protease subunit HslV (183 aa).

The active site involves Thr10. Na(+) contacts are provided by Ala164, Cys167, and Thr170.

Belongs to the peptidase T1B family. HslV subfamily. In terms of assembly, a double ring-shaped homohexamer of HslV is capped on each side by a ring-shaped HslU homohexamer. The assembly of the HslU/HslV complex is dependent on binding of ATP.

Its subcellular location is the cytoplasm. The enzyme catalyses ATP-dependent cleavage of peptide bonds with broad specificity.. Its activity is regulated as follows. Allosterically activated by HslU binding. Protease subunit of a proteasome-like degradation complex believed to be a general protein degrading machinery. The chain is ATP-dependent protease subunit HslV from Rhizorhabdus wittichii (strain DSM 6014 / CCUG 31198 / JCM 15750 / NBRC 105917 / EY 4224 / RW1) (Sphingomonas wittichii).